The primary structure comprises 141 residues: Hemoglobin subunit beta-C(NA) (141 aa).

The Globin domain occupies Pro-1 to His-141. Heme b contacts are provided by His-58 and His-87.

It belongs to the globin family. Heterotetramer of two alpha chains and two beta chains. Red blood cells.

Functionally, involved in oxygen transport from the lung to the various peripheral tissues. This is Hemoglobin subunit beta-C(NA) from Ammotragus lervia (Barbary sheep).